The primary structure comprises 309 residues: 4-hydroxy-3-methylbut-2-enyl diphosphate reductase (309 aa).

Cysteine 12 contributes to the [4Fe-4S] cluster binding site. 2 residues coordinate (2E)-4-hydroxy-3-methylbut-2-enyl diphosphate: histidine 41 and histidine 74. Dimethylallyl diphosphate is bound by residues histidine 41 and histidine 74. The isopentenyl diphosphate site is built by histidine 41 and histidine 74. Residue cysteine 96 coordinates [4Fe-4S] cluster. Histidine 124 serves as a coordination point for (2E)-4-hydroxy-3-methylbut-2-enyl diphosphate. Dimethylallyl diphosphate is bound at residue histidine 124. An isopentenyl diphosphate-binding site is contributed by histidine 124. Catalysis depends on glutamate 126, which acts as the Proton donor. Position 167 (threonine 167) interacts with (2E)-4-hydroxy-3-methylbut-2-enyl diphosphate. Cysteine 197 is a [4Fe-4S] cluster binding site. Serine 225, serine 226, asparagine 227, and serine 269 together coordinate (2E)-4-hydroxy-3-methylbut-2-enyl diphosphate. The dimethylallyl diphosphate site is built by serine 225, serine 226, asparagine 227, and serine 269. Residues serine 225, serine 226, asparagine 227, and serine 269 each contribute to the isopentenyl diphosphate site.

It belongs to the IspH family. [4Fe-4S] cluster is required as a cofactor.

It carries out the reaction isopentenyl diphosphate + 2 oxidized [2Fe-2S]-[ferredoxin] + H2O = (2E)-4-hydroxy-3-methylbut-2-enyl diphosphate + 2 reduced [2Fe-2S]-[ferredoxin] + 2 H(+). It catalyses the reaction dimethylallyl diphosphate + 2 oxidized [2Fe-2S]-[ferredoxin] + H2O = (2E)-4-hydroxy-3-methylbut-2-enyl diphosphate + 2 reduced [2Fe-2S]-[ferredoxin] + 2 H(+). It functions in the pathway isoprenoid biosynthesis; dimethylallyl diphosphate biosynthesis; dimethylallyl diphosphate from (2E)-4-hydroxy-3-methylbutenyl diphosphate: step 1/1. The protein operates within isoprenoid biosynthesis; isopentenyl diphosphate biosynthesis via DXP pathway; isopentenyl diphosphate from 1-deoxy-D-xylulose 5-phosphate: step 6/6. Its function is as follows. Catalyzes the conversion of 1-hydroxy-2-methyl-2-(E)-butenyl 4-diphosphate (HMBPP) into a mixture of isopentenyl diphosphate (IPP) and dimethylallyl diphosphate (DMAPP). Acts in the terminal step of the DOXP/MEP pathway for isoprenoid precursor biosynthesis. In Shewanella pealeana (strain ATCC 700345 / ANG-SQ1), this protein is 4-hydroxy-3-methylbut-2-enyl diphosphate reductase.